We begin with the raw amino-acid sequence, 109 residues long: Nucleoid-associated protein LJ_0424 (109 aa).

This sequence belongs to the YbaB/EbfC family. As to quaternary structure, homodimer.

The protein resides in the cytoplasm. The protein localises to the nucleoid. Functionally, binds to DNA and alters its conformation. May be involved in regulation of gene expression, nucleoid organization and DNA protection. The protein is Nucleoid-associated protein LJ_0424 of Lactobacillus johnsonii (strain CNCM I-12250 / La1 / NCC 533).